A 288-amino-acid chain; its full sequence is Pantothenate synthetase (288 aa).

31 to 38 is an ATP binding site; it reads MGNLHRGH. His-38 acts as the Proton donor in catalysis. Gln-62 serves as a coordination point for (R)-pantoate. Gln-62 serves as a coordination point for beta-alanine. 150–153 serves as a coordination point for ATP; that stretch reads GQKD. Residue Gln-156 coordinates (R)-pantoate. ATP-binding positions include Ile-179 and 187–190; that span reads LSSR.

The protein belongs to the pantothenate synthetase family. Homodimer.

It localises to the cytoplasm. The enzyme catalyses (R)-pantoate + beta-alanine + ATP = (R)-pantothenate + AMP + diphosphate + H(+). Its pathway is cofactor biosynthesis; (R)-pantothenate biosynthesis; (R)-pantothenate from (R)-pantoate and beta-alanine: step 1/1. In terms of biological role, catalyzes the condensation of pantoate with beta-alanine in an ATP-dependent reaction via a pantoyl-adenylate intermediate. This Wigglesworthia glossinidia brevipalpis protein is Pantothenate synthetase.